Consider the following 126-residue polypeptide: Fluoride-specific ion channel FluC 2 (126 aa).

The next 4 membrane-spanning stretches (helical) occupy residues 11 to 31 (IFLI…LCEL), 43 to 63 (VLGS…GFIG), 69 to 89 (AFGT…VQSF), and 93 to 113 (FFPA…GVFM). Residues glycine 76 and threonine 79 each coordinate Na(+).

The protein belongs to the fluoride channel Fluc/FEX (TC 1.A.43) family.

The protein resides in the cell membrane. The catalysed reaction is fluoride(in) = fluoride(out). With respect to regulation, na(+) is not transported, but it plays an essential structural role and its presence is essential for fluoride channel function. Fluoride-specific ion channel. Important for reducing fluoride concentration in the cell, thus reducing its toxicity. This is Fluoride-specific ion channel FluC 2 from Methanosarcina barkeri (strain Fusaro / DSM 804).